The chain runs to 259 residues: Imidazole glycerol phosphate synthase subunit HisF (259 aa).

Active-site residues include aspartate 11 and aspartate 130.

It belongs to the HisA/HisF family. In terms of assembly, heterodimer of HisH and HisF.

The protein resides in the cytoplasm. It catalyses the reaction 5-[(5-phospho-1-deoxy-D-ribulos-1-ylimino)methylamino]-1-(5-phospho-beta-D-ribosyl)imidazole-4-carboxamide + L-glutamine = D-erythro-1-(imidazol-4-yl)glycerol 3-phosphate + 5-amino-1-(5-phospho-beta-D-ribosyl)imidazole-4-carboxamide + L-glutamate + H(+). Its pathway is amino-acid biosynthesis; L-histidine biosynthesis; L-histidine from 5-phospho-alpha-D-ribose 1-diphosphate: step 5/9. IGPS catalyzes the conversion of PRFAR and glutamine to IGP, AICAR and glutamate. The HisF subunit catalyzes the cyclization activity that produces IGP and AICAR from PRFAR using the ammonia provided by the HisH subunit. The sequence is that of Imidazole glycerol phosphate synthase subunit HisF from Desulforapulum autotrophicum (strain ATCC 43914 / DSM 3382 / VKM B-1955 / HRM2) (Desulfobacterium autotrophicum).